A 307-amino-acid chain; its full sequence is Protoheme IX farnesyltransferase (307 aa).

9 consecutive transmembrane segments (helical) span residues 28 to 48 (VTQL…PGMV), 50 to 70 (WPVL…AFAI), 100 to 120 (ILLF…VFAN), 122 to 142 (LTMW…TLLL), 149 to 169 (NIVI…AAVA), 176 to 196 (AWIL…ALAL), 218 to 238 (FTLL…ILPF), 243 to 263 (SGYL…VHAW), and 282 to 302 (IVYL…KFGP).

Belongs to the UbiA prenyltransferase family. Protoheme IX farnesyltransferase subfamily.

The protein resides in the cell inner membrane. The catalysed reaction is heme b + (2E,6E)-farnesyl diphosphate + H2O = Fe(II)-heme o + diphosphate. The protein operates within porphyrin-containing compound metabolism; heme O biosynthesis; heme O from protoheme: step 1/1. Its function is as follows. Converts heme B (protoheme IX) to heme O by substitution of the vinyl group on carbon 2 of heme B porphyrin ring with a hydroxyethyl farnesyl side group. This Ralstonia nicotianae (strain ATCC BAA-1114 / GMI1000) (Ralstonia solanacearum) protein is Protoheme IX farnesyltransferase.